Here is a 125-residue protein sequence, read N- to C-terminus: Small ribosomal subunit protein bS6 (125 aa).

Residues 96–125 (ETGASSMMKTVEREEARKASQAEFAAANER) are disordered. Residues 105–115 (TVEREEARKAS) are compositionally biased toward basic and acidic residues.

This sequence belongs to the bacterial ribosomal protein bS6 family.

In terms of biological role, binds together with bS18 to 16S ribosomal RNA. The sequence is that of Small ribosomal subunit protein bS6 from Paracidovorax citrulli (strain AAC00-1) (Acidovorax citrulli).